The chain runs to 187 residues: Elongation factor P (187 aa).

It belongs to the elongation factor P family.

It is found in the cytoplasm. Its pathway is protein biosynthesis; polypeptide chain elongation. Involved in peptide bond synthesis. Stimulates efficient translation and peptide-bond synthesis on native or reconstituted 70S ribosomes in vitro. Probably functions indirectly by altering the affinity of the ribosome for aminoacyl-tRNA, thus increasing their reactivity as acceptors for peptidyl transferase. This Desulfosudis oleivorans (strain DSM 6200 / JCM 39069 / Hxd3) (Desulfococcus oleovorans) protein is Elongation factor P.